Reading from the N-terminus, the 782-residue chain is Semaphorin-3G (782 aa).

The first 22 residues, 1 to 22, serve as a signal peptide directing secretion; it reads MAPSAWAICWLLGGLLLHGGSS. Positions 32-519 constitute a Sema domain; the sequence is RLRLSYRDLL…SRLGVAQLRL (488 aa). Asn-44 is a glycosylation site (N-linked (GlcNAc...) asparagine). Cysteines 105 and 116 form a disulfide. The N-linked (GlcNAc...) asparagine glycan is linked to Asn-127. 5 disulfides stabilise this stretch: Cys-134-Cys-143, Cys-270-Cys-382, Cys-294-Cys-342, Cys-522-Cys-540, and Cys-603-Cys-655. In terms of domain architecture, Ig-like C2-type spans 569–671; sequence PALQCLGQSQ…FSQTVVRLAL (103 aa).

The protein belongs to the semaphorin family.

The protein localises to the secreted. Has chemorepulsive activities for sympathetic axons. Ligand of NRP2. This chain is Semaphorin-3G (SEMA3G), found in Homo sapiens (Human).